A 178-amino-acid chain; its full sequence is Female-specific protein transformer (178 aa).

Composition is skewed to basic and acidic residues over residues 1-18 and 25-40; these read MKMDADSSCGADHRDSHG and REREQHGRTSNRDSKK. The segment at 1-117 is disordered; the sequence is MKMDADSSCG…RRYNPPPKII (117 aa). 2 stretches are compositionally biased toward basic residues: residues 59-73 and 81-108; these read RRLRKRSPRSTRRSA and RRHRHRSRSRNRSRSRSSERRRRQRSPR.

Its subcellular location is the nucleus speckle. Its function is as follows. Member of the regulatory pathway controlling female somatic sexual differentiation, regulated by Sxl. Activates dsx female-specific splicing by promoting the formation of a splicing enhancer complex which consists of tra, tra2 and sr proteins. The protein is Female-specific protein transformer (tra) of Drosophila erecta (Fruit fly).